Consider the following 60-residue polypeptide: UPF0434 protein Spro_1718 (60 aa).

It belongs to the UPF0434 family.

This Serratia proteamaculans (strain 568) protein is UPF0434 protein Spro_1718.